A 214-amino-acid chain; its full sequence is MQLFHLCLIISCTCPTVQASKLCLGWLWGMDIDPYKEFGATVELLSFLPSDFFPSVRDLLDTASALYREALESPEHCSPHHTALRETILCWGELMTLATWVGNNLEDPASRDLVVNYVNTNMGLKIRQLLWFHISCLTFGRETVLEYLVSFGVWIRTPPAYRPPNAPILSTLPETTVVRRRDRGRSPRRRTPSPRRRRSQSPRRRRSQSRESQC.

The N-terminal stretch at 1 to 19 (MQLFHLCLIISCTCPTVQA) is a signal peptide. The tract at residues 25-27 (GWL) is HBEAG. The disordered stretch occupies residues 165–214 (NAPILSTLPETTVVRRRDRGRSPRRRTPSPRRRRSQSPRRRRSQSRESQC). Positions 178-207 (VRRRDRGRSPRRRTPSPRRRRSQSPRRRRS) are enriched in basic residues. The 1; half-length repeat unit spans residues 186–192 (SPRRRTP). Residues 186–208 (SPRRRTPSPRRRRSQSPRRRRSQ) are 3 X 8 AA repeats of S-P-R-R-R-R-S-Q. A propeptide spanning residues 186–214 (SPRRRTPSPRRRRSQSPRRRRSQSRESQC) is cleaved from the precursor. 2 consecutive repeat copies span residues 193 to 200 (SPRRRRSQ) and 201 to 208 (SPRRRRSQ).

Belongs to the orthohepadnavirus precore antigen family. As to quaternary structure, homodimerizes. Post-translationally, phosphorylated. In terms of processing, cleaved by host furin.

It is found in the secreted. The protein resides in the host nucleus. In terms of biological role, may regulate immune response to the intracellular capsid in acting as a T-cell tolerogen, by having an immunoregulatory effect which prevents destruction of infected cells by cytotoxic T-cells. This immune regulation may predispose to chronicity during perinatal infections and prevent severe liver injury during adult infections. This is External core antigen from Homo sapiens (Human).